Consider the following 339-residue polypeptide: Ribosomal RNA small subunit methyltransferase H (339 aa).

Residues 40–42, Asp-58, Phe-85, Asp-106, and Gln-113 contribute to the S-adenosyl-L-methionine site; that span reads GGY.

This sequence belongs to the methyltransferase superfamily. RsmH family.

It is found in the cytoplasm. It carries out the reaction cytidine(1402) in 16S rRNA + S-adenosyl-L-methionine = N(4)-methylcytidine(1402) in 16S rRNA + S-adenosyl-L-homocysteine + H(+). Specifically methylates the N4 position of cytidine in position 1402 (C1402) of 16S rRNA. The polypeptide is Ribosomal RNA small subunit methyltransferase H (Parvibaculum lavamentivorans (strain DS-1 / DSM 13023 / NCIMB 13966)).